Reading from the N-terminus, the 595-residue chain is MSQAYQPDSTKTSAKKSSAVTLNPPKRKTLMRLLAYLKPYWWAILLTITGFAINAGTEIWIAKLLQYITDAINQNDQSKQGLFPFIIVMLFFVRGVGSFLGNYYTALVSRNLVYELRVEVFNKLLRLPSSFYLANPAGTISSKLIFDVEQVTAASTDSLKTLLRDGLTVIALMGFLLYSNWRLTLILFVVLPPILWIIRVASKRYLKLSKGIQATMGGVSHITNEVINGYQVVKNYGGQAYESKRFDEVSKKNLRQGMKIVVTNSINTPAVQLLMAVAMAVVVWLALRPAVIDDISAGQFISYIAAAGLLSKPVRSLTDVNQQLQRGIAAGESIFALLDEPEEEDTGVLSPALVGEIKLDNISLVYPDSTVALHDFNLDIRAGETVALVGRSGAGKSSLVNLLTRTLSTSSGQITLDGMPIEDIKLESLRAQIAMVNQQVVLFNTTVFNNIAYGSLAHKTPAEVEQAAKDAFAHDFIMQMPNGYQSEIGAEGLQLSGGQRQRLSIARALLKDAPILILDEATSALDNESEYYIQKALDNIMRNRTTLVIAHRLTTIESADRIAVLDGGRIVELGTHAELMQLHGHYAQMYARDFE.

The disordered stretch occupies residues 1–20 (MSQAYQPDSTKTSAKKSSAV). A compositionally biased stretch (low complexity) spans 9-19 (STKTSAKKSSA). Transmembrane regions (helical) follow at residues 41-61 (WWAILLTITGFAINAGTEIWI), 81-101 (GLFPFIIVMLFFVRGVGSFLG), 169-189 (VIALMGFLLYSNWRLTLILFV), and 266-286 (INTPAVQLLMAVAMAVVVWLA). In terms of domain architecture, ABC transmembrane type-1 spans 45 to 326 (LLTITGFAIN…LTDVNQQLQR (282 aa)). Residues 357–592 (IKLDNISLVY…HGHYAQMYAR (236 aa)) enclose the ABC transporter domain. ATP is bound at residue 390 to 397 (GRSGAGKS).

It belongs to the ABC transporter superfamily. Lipid exporter (TC 3.A.1.106) family. Homodimer.

It is found in the cell inner membrane. It carries out the reaction ATP + H2O + lipid A-core oligosaccharideSide 1 = ADP + phosphate + lipid A-core oligosaccharideSide 2.. Functionally, involved in lipopolysaccharide (LPS) biosynthesis. Translocates lipid A-core from the inner to the outer leaflet of the inner membrane. Transmembrane domains (TMD) form a pore in the inner membrane and the ATP-binding domain (NBD) is responsible for energy generation. This chain is ATP-dependent lipid A-core flippase, found in Psychrobacter arcticus (strain DSM 17307 / VKM B-2377 / 273-4).